Reading from the N-terminus, the 240-residue chain is Competence protein ComFC (240 aa).

It belongs to the ComF/GntX family. Monomer and dimer in solution. Interacts with ComFA and DprA; ComFA-ComFC form rings about 150 Angstroms in diameter with apparent 6-fold symmetry.

Involved in transformation (genetic competence for DNA uptake). This chain is Competence protein ComFC (comFC), found in Bacillus subtilis (strain 168).